We begin with the raw amino-acid sequence, 634 residues long: Serine/threonine kinase NLK (634 aa).

The Protein kinase domain maps to 240 to 531; the sequence is SQPDRPIGYG…VEEALQHRYL (292 aa). ATP is bound by residues 246 to 254 and Lys-269; that span reads IGYGAFGVV. The active-site Proton acceptor is Asp-366.

The protein belongs to the protein kinase superfamily. CMGC Ser/Thr protein kinase family. MAP kinase subfamily. In terms of assembly, component of the beta-catenin-lit-1 complex (also called the lit-1/wrm-1 complex or the wrm-1/lit-1 kinase complex) at least composed of lit-1 and wrm-1. Interacts with wrm-1 (via N-terminus); the interaction is direct and activates lit-1 kinase activity which leads to the phosphorylation of pop-1. This promotes pop-1 interaction with par-5 and translocation of pop-1 from the nucleus to the cytoplasm. Interacts with pop-1 (when phosphorylated on 'Ser-118' and 'Ser-127'); the interaction is dependent on the beta-catenin-lit-1 complex. It depends on Mg(2+) as a cofactor. As to expression, expressed in the pharynx and seam and vulval cells.

It is found in the cytoplasm. It localises to the cell cortex. The protein resides in the nucleus. It catalyses the reaction L-seryl-[protein] + ATP = O-phospho-L-seryl-[protein] + ADP + H(+). The catalysed reaction is L-threonyl-[protein] + ATP = O-phospho-L-threonyl-[protein] + ADP + H(+). Its function is as follows. Has a role in the Wnt signaling pathway controlling the asymmetry of cell divisions during embryogenesis. Operates in the AB and EMS cell lineages influencing cell specification. Required for body wall muscle development, endoderm development, pop-1 asymmetry and T-cell division asymmetry. Component of the beta-catenin-lit-1 complex which promotes the phosphorylation, down-regulation and subcellular relocation of pop-1. Regulates plp-1 nuclear localization in embryos. Plays a role in male tail tip morphogenesis. This Caenorhabditis elegans protein is Serine/threonine kinase NLK.